We begin with the raw amino-acid sequence, 349 residues long: DNA replication and repair protein RecF (349 aa).

Residue glycine 29–threonine 36 coordinates ATP.

This sequence belongs to the RecF family.

The protein localises to the cytoplasm. In terms of biological role, the RecF protein is involved in DNA metabolism; it is required for DNA replication and normal SOS inducibility. RecF binds preferentially to single-stranded, linear DNA. It also seems to bind ATP. The polypeptide is DNA replication and repair protein RecF (Acholeplasma laidlawii (strain PG-8A)).